The sequence spans 762 residues: MKNLKKLIAVVSTFALVFSAMAVGFAATTPFTDVKDDAPYASAVARLYALNITNGVGDPKFGVDQPVTRAQMITFVNRMLGYEDLAEMAKSEKSAFKDVPQNHWAVGQINLAYKLGLAQGVGNGKFDPNSELRYAQALAFVLRALGFKDLDWPYGYLAKAQDLGLVHGLNLAYNGVIKRGDLALILDRALEVPMVKYVDGKEVLGEPLISKVATKAEYTVIATNAQDRSVEEGKVAVLDKDGKLTTINAGLVDFSEYLGKKVIVYSERFGDPVYVAEGDNDVVSFTEGQDSVGTTVYKNDDNKTAIKVDDNAYVLYNGYLTKVSKVTVKEGAEVTIINNNYLIVNGSYDNSTIVYNDVQSGDKYLNRDSNYELKGTVTVTGAVSKVTDIKANDYIYYGKQYDVNGNVVGTVIYVVRNQVTGTVTEKSVSGSTYKASIDNVSYTVADNNVWNQLEPGKKVTVILNKDNVIVGISSTTTTTAVNYAIFKEKSDPFTAWFAKVKLILPDAAEKVFDAVYSDVYDKVNLAEGTIVTYTVDANGKLNDIQRANDQPFSSASYKADAKVLTEGSTTYYITDNTVLLNNTSDGYKALKLTDLKDATNLNVKIVADNYNVAKVVVFNNASFVSTTTSTVYAYVTGTADVYVNGSTFTRLTVLENGQTKTYDANAQLATNYTHKAVVLTLTNAKIANIALPTVASGVKLTNIDQANLRITDTTNKGYLLDPNFIVVDTNGNLKGLSDITKDTGVNLYTNDVGKVFVIEIVQ.

The signal sequence occupies residues methionine 1–alanine 26. SLH domains lie at alanine 27–lysine 90, glutamate 92–glycine 155, and tyrosine 156–leucine 204. O-linked (Glc...) tyrosine glycans are attached at residues tyrosine 297, tyrosine 516, tyrosine 520, and tyrosine 632.

Glycosylated; contains 8% carbohydrates, which correspond to about 40 to 50 sugar molecules per monomer. O-linked glycans consist of Glc, GalNAc and GlcNAc.

The protein resides in the secreted. The protein localises to the cell wall. It is found in the S-layer. The S-layer is a paracrystalline mono-layered assembly of proteins which coat the surface of bacteria. This Thermoanaerobacter kivui (Acetogenium kivui) protein is Cell surface protein.